Here is a 230-residue protein sequence, read N- to C-terminus: Ribose-5-phosphate isomerase A (230 aa).

Residues Thr-31–Thr-34, Asp-88–Asp-91, and Lys-101–Gly-104 each bind substrate. The active-site Proton acceptor is the Glu-110. Lys-128 is a binding site for substrate.

Belongs to the ribose 5-phosphate isomerase family. Homodimer.

The catalysed reaction is aldehydo-D-ribose 5-phosphate = D-ribulose 5-phosphate. The protein operates within carbohydrate degradation; pentose phosphate pathway; D-ribose 5-phosphate from D-ribulose 5-phosphate (non-oxidative stage): step 1/1. In terms of biological role, catalyzes the reversible conversion of ribose-5-phosphate to ribulose 5-phosphate. The protein is Ribose-5-phosphate isomerase A of Lactobacillus helveticus (strain DPC 4571).